Consider the following 776-residue polypeptide: Ribosomal RNA large subunit methyltransferase K/L (776 aa).

The region spanning 68–183 is the THUMP domain; sequence DLYKICLWSR…DKQAELYLDL (116 aa).

The protein belongs to the methyltransferase superfamily. RlmKL family.

The protein localises to the cytoplasm. It catalyses the reaction guanosine(2445) in 23S rRNA + S-adenosyl-L-methionine = N(2)-methylguanosine(2445) in 23S rRNA + S-adenosyl-L-homocysteine + H(+). The enzyme catalyses guanosine(2069) in 23S rRNA + S-adenosyl-L-methionine = N(2)-methylguanosine(2069) in 23S rRNA + S-adenosyl-L-homocysteine + H(+). Functionally, specifically methylates the guanine in position 2445 (m2G2445) and the guanine in position 2069 (m7G2069) of 23S rRNA. The polypeptide is Ribosomal RNA large subunit methyltransferase K/L (Psychrobacter cryohalolentis (strain ATCC BAA-1226 / DSM 17306 / VKM B-2378 / K5)).